Consider the following 360-residue polypeptide: Transcription factor MYB39 (360 aa).

HTH myb-type domains follow at residues 10–62 (DKGV…MNYL) and 63–117 (RPDI…RKKL). DNA-binding regions (H-T-H motif) lie at residues 38-62 (WRSL…MNYL) and 90-113 (WSKI…NTHM). A disordered region spans residues 299–324 (PSTGSVSVSPETTSLNHPSTAQHSSG).

The protein resides in the nucleus. The chain is Transcription factor MYB39 (MYB39) from Arabidopsis thaliana (Mouse-ear cress).